The chain runs to 496 residues: Fibronectin type III and SPRY domain-containing protein 1 (496 aa).

The stretch at 4-99 (QREALRKIIK…ALESSEELLE (96 aa)) forms a coiled coil. The COS domain maps to 105-162 (LQAMDSEDFPQAAKQIKDGVTMAPAFRLSLKAKVSDNMSHLMVDFAQERQMLQALKFL). The region spanning 164 to 268 (VPSAPVIDLA…EPVTLETPAF (105 aa)) is the Fibronectin type-III domain. The B30.2/SPRY domain maps to 268-477 (FMFRLDASTS…VTTGLQVPSA (210 aa)). The disordered stretch occupies residues 301–336 (KAREKDGKGRTASPINSPARGTPSPKRMPSGRGGRD). Residues R310 and R320 each carry the omega-N-methylarginine modification.

In terms of assembly, oligomerization is required for binding to microtubules. As to expression, highly expressed in brain tissues, including cerebellum, cerebral cortex, medulla, occipital pole, frontal lobe, temporal lobe and putamen. Lower expression in spinal cord.

The protein resides in the cytoplasm. The protein localises to the cytoskeleton. It is found in the microtubule organizing center. Its subcellular location is the centrosome. It localises to the nucleus. The protein resides in the cleavage furrow. Its function is as follows. May be involved in microtubule organization and stabilization. This is Fibronectin type III and SPRY domain-containing protein 1 (FSD1) from Homo sapiens (Human).